Here is a 295-residue protein sequence, read N- to C-terminus: Protoheme IX farnesyltransferase (295 aa).

Helical transmembrane passes span 30-50 (LVVLTGVTGIIIAPGNIHPLI), 51-71 (AVISTLCIALGSGAAGAINMW), 93-115 (ISRSSALEVGLVLSFISVTIMMI), 119-136 (YISGILLAISIGFYIYVY), 148-168 (IVIGGAAGALPPIIGWTSVTG), 175-195 (LVLFLIIFMWTPPHFWALSLL), 219-239 (IHILVYSILLFPITLLPGLFL), 244-264 (LYEITAIPLGLMFVVQAFQVF), and 275-295 (MFTYSIIYLFILFTCIMLSSF).

This sequence belongs to the UbiA prenyltransferase family. Protoheme IX farnesyltransferase subfamily.

Its subcellular location is the cell inner membrane. It carries out the reaction heme b + (2E,6E)-farnesyl diphosphate + H2O = Fe(II)-heme o + diphosphate. It participates in porphyrin-containing compound metabolism; heme O biosynthesis; heme O from protoheme: step 1/1. Its function is as follows. Converts heme B (protoheme IX) to heme O by substitution of the vinyl group on carbon 2 of heme B porphyrin ring with a hydroxyethyl farnesyl side group. This chain is Protoheme IX farnesyltransferase, found in Ehrlichia ruminantium (strain Gardel).